Consider the following 315-residue polypeptide: Malate dehydrogenase (315 aa).

NAD(+) is bound by residues 11-16 (GAGHVG) and aspartate 35. Positions 84 and 90 each coordinate substrate. NAD(+)-binding positions include asparagine 97 and 120 to 122 (VTN). Asparagine 122 and arginine 153 together coordinate substrate. Catalysis depends on histidine 177, which acts as the Proton acceptor.

This sequence belongs to the LDH/MDH superfamily. MDH type 3 family.

It carries out the reaction (S)-malate + NAD(+) = oxaloacetate + NADH + H(+). Catalyzes the reversible oxidation of malate to oxaloacetate. The polypeptide is Malate dehydrogenase (Thermosulfidibacter takaii (strain DSM 17441 / JCM 13301 / NBRC 103674 / ABI70S6)).